A 304-amino-acid chain; its full sequence is GTPase Era (304 aa).

The Era-type G domain maps to 9–177; it reads HSGFVAIVGR…VTTLSQHMPE (169 aa). The segment at 17 to 24 is G1; sequence GRPNVGKS. Residue 17–24 participates in GTP binding; it reads GRPNVGKS. Residues 43–47 form a G2 region; sequence QTTRN. The tract at residues 64 to 67 is G3; it reads DTPG. GTP is bound by residues 64-68 and 127-130; these read DTPGI and NKID. Positions 127 to 130 are G4; it reads NKID. Positions 156–158 are G5; that stretch reads ISA. The KH type-2 domain occupies 208-285; that stretch reads TRQEVPHSVA…YLELWVKVSE (78 aa).

Belongs to the TRAFAC class TrmE-Era-EngA-EngB-Septin-like GTPase superfamily. Era GTPase family. As to quaternary structure, monomer.

The protein localises to the cytoplasm. Its subcellular location is the cell membrane. Functionally, an essential GTPase that binds both GDP and GTP, with rapid nucleotide exchange. Plays a role in 16S rRNA processing and 30S ribosomal subunit biogenesis and possibly also in cell cycle regulation and energy metabolism. The sequence is that of GTPase Era from Pediococcus pentosaceus (strain ATCC 25745 / CCUG 21536 / LMG 10740 / 183-1w).